The chain runs to 979 residues: UPF0182 protein Mb0065 (979 aa).

7 consecutive transmembrane segments (helical) span residues 19-41, 63-85, 114-136, 174-196, 208-230, 261-280, and 285-307; these read LVTAGMGMLALLLFGPRLVDIYV, LAIVAAVALVVAGIVLAALLLAY, LFGWGIAVTLGVVCGLIASFDWV, WLFVAVVLAFLASLLTHYLFGGL, AARVQLAVFAGAVVLLKAVAYWL, LVLVAIAVLCAVSFFTAIFL, and IPAMAAALLVLSAILVGGLWPLL. Residues 898 to 948 form a disordered region; that stretch reads GTGRVATAPGGDAASAPPPGAGGPAPPQAVPPPRTTQPPAAPPRGPDVPPA. Low complexity predominate over residues 902–912; sequence VATAPGGDAAS. A compositionally biased stretch (pro residues) spans 913–946; it reads APPPGAGGPAPPQAVPPPRTTQPPAAPPRGPDVP.

The protein belongs to the UPF0182 family.

It localises to the cell membrane. In Mycobacterium bovis (strain ATCC BAA-935 / AF2122/97), this protein is UPF0182 protein Mb0065.